The following is a 238-amino-acid chain: Sugar fermentation stimulation protein homolog (238 aa).

It belongs to the SfsA family.

This is Sugar fermentation stimulation protein homolog from Bartonella tribocorum (strain CIP 105476 / IBS 506).